Here is a 363-residue protein sequence, read N- to C-terminus: Spermidine/putrescine import ATP-binding protein PotA 2 (363 aa).

Positions 6 to 236 (LEIRNVTRRF…PRSRFVADFI (231 aa)) constitute an ABC transporter domain. 38-45 (GPSGCGKT) provides a ligand contact to ATP.

Belongs to the ABC transporter superfamily. Spermidine/putrescine importer (TC 3.A.1.11.1) family. As to quaternary structure, the complex is composed of two ATP-binding proteins (PotA), two transmembrane proteins (PotB and PotC) and a solute-binding protein (PotD).

The protein resides in the cell inner membrane. The catalysed reaction is ATP + H2O + polyamine-[polyamine-binding protein]Side 1 = ADP + phosphate + polyamineSide 2 + [polyamine-binding protein]Side 1.. In terms of biological role, part of the ABC transporter complex PotABCD involved in spermidine/putrescine import. Responsible for energy coupling to the transport system. This chain is Spermidine/putrescine import ATP-binding protein PotA 2, found in Pseudomonas aeruginosa (strain ATCC 15692 / DSM 22644 / CIP 104116 / JCM 14847 / LMG 12228 / 1C / PRS 101 / PAO1).